Consider the following 340-residue polypeptide: Glycerol-3-phosphate dehydrogenase [NAD(P)+] (340 aa).

The NADPH site is built by Ser-14, Trp-15, and Lys-109. Residues Lys-109, Gly-140, and Ser-142 each contribute to the sn-glycerol 3-phosphate site. Ala-144 provides a ligand contact to NADPH. Residues Lys-195, Asp-248, Ser-258, Arg-259, and Asn-260 each coordinate sn-glycerol 3-phosphate. Lys-195 acts as the Proton acceptor in catalysis. An NADPH-binding site is contributed by Arg-259. Positions 283 and 285 each coordinate NADPH.

This sequence belongs to the NAD-dependent glycerol-3-phosphate dehydrogenase family.

It is found in the cytoplasm. It carries out the reaction sn-glycerol 3-phosphate + NAD(+) = dihydroxyacetone phosphate + NADH + H(+). The enzyme catalyses sn-glycerol 3-phosphate + NADP(+) = dihydroxyacetone phosphate + NADPH + H(+). It participates in membrane lipid metabolism; glycerophospholipid metabolism. Its function is as follows. Catalyzes the reduction of the glycolytic intermediate dihydroxyacetone phosphate (DHAP) to sn-glycerol 3-phosphate (G3P), the key precursor for phospholipid synthesis. This chain is Glycerol-3-phosphate dehydrogenase [NAD(P)+], found in Syntrophobacter fumaroxidans (strain DSM 10017 / MPOB).